A 238-amino-acid chain; its full sequence is Thrombin-like enzyme gyroxin B2.1 (238 aa).

The Peptidase S1 domain maps to 1–229 (VIGGDECNIN…HLDWIQNIIA (229 aa)). Disulfide bonds link Cys7/Cys141, Cys28/Cys44, Cys78/Cys236, Cys120/Cys190, Cys152/Cys169, and Cys180/Cys205. Residue His43 is the Charge relay system of the active site. Asn81 carries an N-linked (GlcNAc...) asparagine glycan. Asp88 functions as the Charge relay system in the catalytic mechanism. Ser184 functions as the Charge relay system in the catalytic mechanism.

It belongs to the peptidase S1 family. Snake venom subfamily. As to quaternary structure, monomer. Expressed by the venom gland.

It is found in the secreted. Thrombin-like snake venom serine protease. Displays a specificity similar to trypsin. Releases only fibrinopeptide A in the conversion of fibrinogen (FGA) to fibrin. Shows coagulant, esterase and amidase activities. Reversibly increases the permeability of the blood brain barrier (BBB) in mice. Induces the barrel rotation syndrome in mice, which is manifested by gyroxin-like, rapid rolling motions. This syndrome may be due to its effect on BBB permeability, and certainly also to other actions affecting endogenous substrates present in the endothelium, nervous tissues or blood. This Crotalus durissus terrificus (South American rattlesnake) protein is Thrombin-like enzyme gyroxin B2.1.